Here is a 186-residue protein sequence, read N- to C-terminus: Allergen Fel d 4 (186 aa).

The first 15 residues, 1 to 15, serve as a signal peptide directing secretion; sequence MKLLLLCLGLILVCA. N-linked (GlcNAc...) asparagine glycosylation is found at asparagine 51 and asparagine 66. Cysteines 81 and 171 form a disulfide.

It belongs to the calycin superfamily. Lipocalin family. Abundant in urine (at protein level).

The protein localises to the secreted. Its function is as follows. May be a pheromone carrier. Acts as a kairomone, detected by the prey vomeronasal organ and inducing fear reactions in mice. The sequence is that of Allergen Fel d 4 from Felis catus (Cat).